The following is a 515-amino-acid chain: GMP synthase [glutamine-hydrolyzing] (515 aa).

Positions 6-198 (KVIIIDYGSQ…LFHVAKLKAD (193 aa)) constitute a Glutamine amidotransferase type-1 domain. The active-site Nucleophile is cysteine 83. Active-site residues include histidine 172 and glutamate 174. A GMPS ATP-PPase domain is found at 199-390 (WTMSSFVERA…LGLPDFIIWR (192 aa)). 226 to 232 (SGGIDST) contributes to the ATP binding site.

In terms of assembly, homodimer.

It carries out the reaction XMP + L-glutamine + ATP + H2O = GMP + L-glutamate + AMP + diphosphate + 2 H(+). It functions in the pathway purine metabolism; GMP biosynthesis; GMP from XMP (L-Gln route): step 1/1. Its function is as follows. Catalyzes the synthesis of GMP from XMP. The sequence is that of GMP synthase [glutamine-hydrolyzing] from Nitratidesulfovibrio vulgaris (strain DSM 19637 / Miyazaki F) (Desulfovibrio vulgaris).